The chain runs to 187 residues: Peptidyl-tRNA hydrolase (187 aa).

Y14 is a binding site for tRNA. The Proton acceptor role is filled by H19. Residues Y63 and N65 each coordinate tRNA.

Belongs to the PTH family. In terms of assembly, monomer.

Its subcellular location is the cytoplasm. It catalyses the reaction an N-acyl-L-alpha-aminoacyl-tRNA + H2O = an N-acyl-L-amino acid + a tRNA + H(+). Hydrolyzes ribosome-free peptidyl-tRNAs (with 1 or more amino acids incorporated), which drop off the ribosome during protein synthesis, or as a result of ribosome stalling. In terms of biological role, catalyzes the release of premature peptidyl moieties from peptidyl-tRNA molecules trapped in stalled 50S ribosomal subunits, and thus maintains levels of free tRNAs and 50S ribosomes. This chain is Peptidyl-tRNA hydrolase, found in Thermodesulfovibrio yellowstonii (strain ATCC 51303 / DSM 11347 / YP87).